A 356-amino-acid chain; its full sequence is Acyl-coenzyme A diphosphatase NUDT19 (356 aa).

Residues 10-241 (AATVMLAAGW…IWLAPPQFYE (232 aa)) enclose the Nudix hydrolase domain. Residues 72–94 (PRFGLGPEPPRQPPFPGLSHGDA) are disordered. Positions 78 to 87 (PEPPRQPPFP) are enriched in pro residues. Positions 97–118 (AALPDDVALRICAIRETFEEAG) match the Nudix box motif. Mg(2+) contacts are provided by glutamate 112 and glutamate 116. Position 299 is an N6-succinyllysine (lysine 299). Residues 354-356 (ARL) carry the Microbody targeting signal motif.

It belongs to the Nudix hydrolase family. As to quaternary structure, monomer. Mg(2+) serves as cofactor. The cofactor is Mn(2+).

It localises to the peroxisome. The enzyme catalyses an acyl-CoA + H2O = an acyl-4'-phosphopantetheine + adenosine 3',5'-bisphosphate + 2 H(+). It carries out the reaction CoA + H2O = (R)-4'-phosphopantetheine + adenosine 3',5'-bisphosphate + 2 H(+). The catalysed reaction is hexanoyl-CoA + H2O = hexanoyl-4'-phosphopantetheine + adenosine 3',5'-bisphosphate + 2 H(+). It catalyses the reaction octanoyl-CoA + H2O = S-octanoyl-4'-phosphopantetheine + adenosine 3',5'-bisphosphate + 2 H(+). The enzyme catalyses butanoyl-CoA + H2O = S-butanoyl-4'-phosphopantetheine + adenosine 3',5'-bisphosphate + 2 H(+). It carries out the reaction propanoyl-CoA + H2O = propanoyl-4'-phosphopantetheine + adenosine 3',5'-bisphosphate + 2 H(+). The catalysed reaction is malonyl-CoA + H2O = malonyl-4'-phosphopantetheine + adenosine 3',5'-bisphosphate + 2 H(+). It catalyses the reaction succinyl-CoA + H2O = succinyl-4'-phosphopantetheine + adenosine 3',5'-bisphosphate + 2 H(+). The enzyme catalyses choloyl-CoA + H2O = S-choloyl-4'-phosphopantetheine + adenosine 3',5'-bisphosphate + 2 H(+). It carries out the reaction 4,8-dimethylnonanoyl-CoA + H2O = S-(4,8-dimethylnonanoyl)-4'-phosphopantetheine + adenosine 3',5'-bisphosphate + 2 H(+). The catalysed reaction is (9Z,12Z,15Z)-octadecatrienoyl-CoA + H2O = S-(9Z,12Z,15Z-octadecatrienoyl)-4'-phosphopantetheine + adenosine 3',5'-bisphosphate + 2 H(+). It catalyses the reaction (9Z,12Z)-octadecadienoyl-CoA + H2O = S-(9Z,12Z-octadecadienoyl)-4'-phosphopantetheine + adenosine 3',5'-bisphosphate + 2 H(+). The enzyme catalyses (9Z)-hexadecenoyl-CoA + H2O = S-(9Z-hexadecenoyl)-4'-phosphopantetheine + adenosine 3',5'-bisphosphate + 2 H(+). It carries out the reaction (9Z)-tetradecenoyl-CoA + H2O = S-(9Z-tetradecenoyl)-4'-phosphopantetheine + adenosine 3',5'-bisphosphate + 2 H(+). The catalysed reaction is (6Z)-octenoyl-CoA + H2O = S-(6Z-octenoyl)-4'-phosphopantetheine + adenosine 3',5'-bisphosphate + 2 H(+). It catalyses the reaction hexadecanoyl-CoA + H2O = S-hexadecanoyl-4'-phosphopantetheine + adenosine 3',5'-bisphosphate + 2 H(+). The enzyme catalyses tetradecanoyl-CoA + H2O = tetradecanoyl-4'-phosphopantetheine + adenosine 3',5'-bisphosphate + 2 H(+). It carries out the reaction dodecanoyl-CoA + H2O = S-dodecanoyl-4'-phosphopantetheine + adenosine 3',5'-bisphosphate + 2 H(+). The catalysed reaction is a 5'-end CoA-ribonucleoside in mRNA + H2O = a 5'-end phospho-adenosine-phospho-ribonucleoside in mRNA + (R)-4'-phosphopantetheine + 2 H(+). Its function is as follows. Fatty acyl-coenzyme A (CoA) diphosphatase that hydrolyzes fatty acyl-CoA to yield acyl-4'-phosphopantetheine and adenosine 3',5'-bisphosphate. Mediates the hydrolysis of a wide range of CoA esters, including choloyl-CoA and branched-chain fatty-acyl-CoA esters and at low substrate concentrations medium and long-chain fatty-acyl-CoA esters are the primary substrates. Highest activity seen with medium-chain acyl-CoA esters and higher rates of activity seen with the unsaturated acyl-CoA esters compared with the saturated esters. Exhibits decapping activity towards dpCoA-capped RNAs in vitro. The polypeptide is Acyl-coenzyme A diphosphatase NUDT19 (Nudt19) (Mus saxicola (Brown spiny mouse)).